Consider the following 276-residue polypeptide: Large ribosomal subunit protein uL2 (276 aa).

The tract at residues 221-276 (RGSAMNPNDHPHGGGEGRAPIGRKSPMTPWGKKARGIKTRDRKKSSNELIIRRRTK) is disordered. Positions 252 to 263 (KKARGIKTRDRK) are enriched in basic residues.

This sequence belongs to the universal ribosomal protein uL2 family. In terms of assembly, part of the 50S ribosomal subunit. Forms a bridge to the 30S subunit in the 70S ribosome.

Functionally, one of the primary rRNA binding proteins. Required for association of the 30S and 50S subunits to form the 70S ribosome, for tRNA binding and peptide bond formation. It has been suggested to have peptidyltransferase activity; this is somewhat controversial. Makes several contacts with the 16S rRNA in the 70S ribosome. The polypeptide is Large ribosomal subunit protein uL2 (Phytoplasma australiense).